The chain runs to 316 residues: MTANKPLLVVIVGPTAVGKTELSIELAKKIGGEIISGDSIQVYRGMDIGTAKVTKEEMQGVPHYLIDILDPDEPFSAFAFKERAQKLITEITERGHIPIIAGGTGLYIQSLIYDYPFDKEEISPEKEQEVKEKMAQLESLSNEALHDYLKSFDPDSAEDIHPNNRKRVLRAVEYYLKTKKLLSYRKKTVQFTENYDTLLIGVEMSREILYQRINCRVDSMLEHGLLQEVEQLMNQGYTSCQSMQAIGYKELIPAVNHEIPINQAVDKLKQHSRNYAKRQMTWFKNKMDVQWFDRAQTSLPLILDEITARIKKRRES.

ATP is bound at residue 13 to 20 (GPTAVGKT). 15–20 (TAVGKT) serves as a coordination point for substrate. The segment at 38–41 (DSIQ) is interaction with substrate tRNA.

It belongs to the IPP transferase family. In terms of assembly, monomer. Mg(2+) serves as cofactor.

It carries out the reaction adenosine(37) in tRNA + dimethylallyl diphosphate = N(6)-dimethylallyladenosine(37) in tRNA + diphosphate. Catalyzes the transfer of a dimethylallyl group onto the adenine at position 37 in tRNAs that read codons beginning with uridine, leading to the formation of N6-(dimethylallyl)adenosine (i(6)A). The polypeptide is tRNA dimethylallyltransferase (Staphylococcus carnosus (strain TM300)).